A 205-amino-acid polypeptide reads, in one-letter code: Large ribosomal subunit protein uL3 (205 aa).

The tract at residues 126–150 is disordered; sequence GGPKTHGQSDRHRAPGSIGSTTTPG.

The protein belongs to the universal ribosomal protein uL3 family. Part of the 50S ribosomal subunit. Forms a cluster with proteins L14 and L19.

Its function is as follows. One of the primary rRNA binding proteins, it binds directly near the 3'-end of the 23S rRNA, where it nucleates assembly of the 50S subunit. This Dehalococcoides mccartyi (strain ATCC BAA-2100 / JCM 16839 / KCTC 5957 / BAV1) protein is Large ribosomal subunit protein uL3.